Reading from the N-terminus, the 879-residue chain is Phosphoenolpyruvate carboxylase (879 aa).

Active-site residues include His141 and Lys546.

Belongs to the PEPCase type 1 family. Requires Mg(2+) as cofactor.

The catalysed reaction is oxaloacetate + phosphate = phosphoenolpyruvate + hydrogencarbonate. Forms oxaloacetate, a four-carbon dicarboxylic acid source for the tricarboxylic acid cycle. In Stutzerimonas stutzeri (strain A1501) (Pseudomonas stutzeri), this protein is Phosphoenolpyruvate carboxylase.